The primary structure comprises 427 residues: Peptidase B (427 aa).

2 residues coordinate Mn(2+): lysine 195 and aspartate 200. The active site involves lysine 207. The Mn(2+) site is built by aspartate 218, aspartate 277, and glutamate 279. The active site involves arginine 281.

Belongs to the peptidase M17 family. In terms of assembly, homohexamer. Requires Mn(2+) as cofactor.

It localises to the cytoplasm. The catalysed reaction is Release of an N-terminal amino acid, Xaa, from a peptide or arylamide. Xaa is preferably Glu or Asp but may be other amino acids, including Leu, Met, His, Cys and Gln.. Functionally, probably plays an important role in intracellular peptide degradation. This is Peptidase B from Salmonella agona (strain SL483).